The sequence spans 147 residues: UPF0251 protein NT01CX_1491 (147 aa).

The protein belongs to the UPF0251 family.

This chain is UPF0251 protein NT01CX_1491, found in Clostridium novyi (strain NT).